The sequence spans 117 residues: Ig heavy chain V region 1-62-3 (117 aa).

The first 19 residues, Met-1–Phe-19, serve as a signal peptide directing secretion. A framework-1 region spans residues Gln-20–Thr-49. Residues Ser-50–His-54 form a complementarity-determining-1 region. The framework-2 stretch occupies residues Trp-55–Gly-68. The interval Arg-69 to Ser-85 is complementarity-determining-2. The framework-3 stretch occupies residues Lys-86 to Arg-117.

The protein is Ig heavy chain V region 1-62-3 (Ighv1-62-3) of Mus musculus (Mouse).